We begin with the raw amino-acid sequence, 448 residues long: MFTVVIVGRPNVGKSTLFNRMIKSDEKIKAITDKFPGVTRDINYGVAKWDDKEFIVVDTGGFFPEEKIEDIIQKQMLEQIEMAISDADLIIHLLDSKEGLLPDDIETARQLRQTGKDILWVVNKIDDPSKLSRIYDFYSIGTEELIPISGITGYGFDELIDKIIEKIPDTQPVNLEQQNLPKIAVVGRPNVGKSTIINALLGKKRMIVSPIPGTTRDTIDAICTYYGKKYLLIDTAGIKRLSYYKKEISQEIYVERLAYFKALRSIERADVAILVIDALEGIVNQDQKIAGIVAEQKKGLIILINKWDLIPANERDKKAKFFTDEIKHKLWFVDYAPYLTVSAIDKTRLTKIFPLIDQILEEYSKRVSTSELNRLFSEKLKDVIMSSHGKELKFYYITQVNVAPPTFVVFVNDQSAVKQHHIKFIEKLLRETFHFKFSPINIKIKQRK.

EngA-type G domains follow at residues 2–171 (FTVV…PDTQ) and 181–364 (PKIA…EEYS). GTP contacts are provided by residues 8–15 (GRPNVGKS), 58–62 (DTGGF), 123–126 (NKID), 187–194 (GRPNVGKS), 234–238 (DTAGI), and 305–308 (NKWD). A KH-like domain is found at 365-448 (KRVSTSELNR…PINIKIKQRK (84 aa)).

The protein belongs to the TRAFAC class TrmE-Era-EngA-EngB-Septin-like GTPase superfamily. EngA (Der) GTPase family. In terms of assembly, associates with the 50S ribosomal subunit.

Its function is as follows. GTPase that plays an essential role in the late steps of ribosome biogenesis. In Thermodesulfovibrio yellowstonii (strain ATCC 51303 / DSM 11347 / YP87), this protein is GTPase Der.